A 1168-amino-acid chain; its full sequence is Probable pre-mRNA-splicing factor ATP-dependent RNA helicase DEAH5 (1168 aa).

The tract at residues 76–206 is disordered; it reads IYPPKPKSEK…KDEYVEEDKG (131 aa). Basic and acidic residues-rich tracts occupy residues 81–172 and 180–206; these read PKSE…DRRS and GRGD…EDKG. One can recognise an S1 motif domain in the interval 214 to 283; sequence YQVYKGRVTR…SSDKYSLSMR (70 aa). The segment at 289–326 is disordered; sequence TGRDLIPLRKPSDEDDSSRSNPSYRTKDGQVTKTGISG. Ser411 bears the Phosphoserine mark. One can recognise a Helicase ATP-binding domain in the interval 525–688; sequence IQAVHDNQVL…FFNCNIFTIP (164 aa). 538–545 provides a ligand contact to ATP; sequence GETGSGKT. The short motif at 635-638 is the DEAH box element; it reads DEAH. Residues 706–886 form the Helicase C-terminal domain; it reads YLDAALITVL…MTTLTMKAMG (181 aa).

It belongs to the DEAD box helicase family. DEAH subfamily. PRP22 sub-subfamily.

It localises to the nucleus. It catalyses the reaction ATP + H2O = ADP + phosphate + H(+). Its function is as follows. May be involved in pre-mRNA splicing. The polypeptide is Probable pre-mRNA-splicing factor ATP-dependent RNA helicase DEAH5 (Arabidopsis thaliana (Mouse-ear cress)).